The following is a 385-amino-acid chain: m7GpppN-mRNA hydrolase (385 aa).

The Nudix hydrolase domain occupies 95 to 226; the sequence is MGVPTYGAII…KLGLAPNKFF (132 aa). The Nudix box signature appears at 129–150; sequence GKVNKEEAPHDCAAREVFEETG. Mn(2+) contacts are provided by E144 and E148. Residues S246, S247, S249, S276, and S284 each carry the phosphoserine modification. A disordered region spans residues 247–266; it reads SDSDNGFSSTGSTPAKPTVE. Positions 249–259 are enriched in low complexity; sequence SDNGFSSTGST.

It belongs to the Nudix hydrolase family. DCP2 subfamily. In terms of assembly, found in a mRNA decay complex with LSM1, LSM3, LSM4, EXOSC2, EXOSC4, EXOSC10, PARN, XRN1, CNOT6, UPF1, UPF2 and UPF3B. Forms a complex with DCP1A, EDC3, DDX6 and EDC4/HEDLS, within this complex directly interacts with EDC4/HEDLS. Interacts with DPC1B, UPF1, UPF2 and UPF3B. Associates with polysomes. Interacts (via N-terminus and C-terminus) with TRIM21 (via N-terminus and C-terminus). Interacts with LIMD1, WTIP and AJUBA. Interacts with DDX17 in an RNA-dependent manner. Interacts with ZC3HAV1. Interacts with APOBEC3G in an RNA-dependent manner. Interacts with ZFP36L1 (via N-terminus). Interacts with NBDY. Mn(2+) is required as a cofactor. Mg(2+) serves as cofactor.

The protein localises to the cytoplasm. It is found in the P-body. Its subcellular location is the nucleus. It carries out the reaction a 5'-end (N(7)-methyl 5'-triphosphoguanosine)-ribonucleoside in mRNA + H2O = N(7)-methyl-GDP + a 5'-end phospho-ribonucleoside in mRNA + 2 H(+). Decapping metalloenzyme that catalyzes the cleavage of the cap structure on mRNAs. Removes the 7-methyl guanine cap structure from mRNA molecules, yielding a 5'-phosphorylated mRNA fragment and 7m-GDP. Necessary for the degradation of mRNAs, both in normal mRNA turnover and in nonsense-mediated mRNA decay. Plays a role in replication-dependent histone mRNA degradation. Has higher activity towards mRNAs that lack a poly(A) tail. Has no activity towards a cap structure lacking an RNA moiety. The presence of a N(6)-methyladenosine methylation at the second transcribed position of mRNAs (N(6),2'-O-dimethyladenosine cap; m6A(m)) provides resistance to DCP2-mediated decapping. Blocks autophagy in nutrient-rich conditions by repressing the expression of ATG-related genes through degradation of their transcripts. This chain is m7GpppN-mRNA hydrolase (DCP2), found in Pongo abelii (Sumatran orangutan).